A 156-amino-acid polypeptide reads, in one-letter code: Small ribosomal subunit protein uS7 (156 aa).

It belongs to the universal ribosomal protein uS7 family. In terms of assembly, part of the 30S ribosomal subunit. Contacts proteins S9 and S11.

One of the primary rRNA binding proteins, it binds directly to 16S rRNA where it nucleates assembly of the head domain of the 30S subunit. Is located at the subunit interface close to the decoding center, probably blocks exit of the E-site tRNA. This is Small ribosomal subunit protein uS7 from Laribacter hongkongensis (strain HLHK9).